The following is a 71-amino-acid chain: UPF0352 protein VCM66_1964 (71 aa).

This sequence belongs to the UPF0352 family.

The protein is UPF0352 protein VCM66_1964 of Vibrio cholerae serotype O1 (strain M66-2).